We begin with the raw amino-acid sequence, 398 residues long: E3 ubiquitin-protein ligase ATL6 (398 aa).

The signal sequence occupies residues Met1–Ser29. The helical transmembrane segment at Ala50 to Phe70 threads the bilayer. The RING-type; atypical zinc finger occupies Cys128–Arg170. A Phosphoserine modification is found at Ser278. The disordered stretch occupies residues Pro368–Val398. Low complexity predominate over residues Gly378–Val398.

Belongs to the RING-type zinc finger family. ATL subfamily.

The protein resides in the membrane. It catalyses the reaction S-ubiquitinyl-[E2 ubiquitin-conjugating enzyme]-L-cysteine + [acceptor protein]-L-lysine = [E2 ubiquitin-conjugating enzyme]-L-cysteine + N(6)-ubiquitinyl-[acceptor protein]-L-lysine.. It functions in the pathway protein modification; protein ubiquitination. In terms of biological role, E3 ubiquitin-protein ligase able to catalyze polyubiquitination with ubiquitin-conjugating enzyme E2 UBC8 in vitro. May be involved in the plant C/N response and the early steps of the plant defense signaling pathway. The sequence is that of E3 ubiquitin-protein ligase ATL6 (ATL6) from Arabidopsis thaliana (Mouse-ear cress).